A 305-amino-acid polypeptide reads, in one-letter code: Ubiquinone biosynthesis protein COQ4 homolog, mitochondrial (305 aa).

Residues His150, Asp151, His154, and Glu166 each contribute to the Zn(2+) site.

The protein belongs to the COQ4 family. As to quaternary structure, component of a multi-subunit COQ enzyme complex. Requires Zn(2+) as cofactor.

Its subcellular location is the mitochondrion inner membrane. The enzyme catalyses a 4-hydroxy-3-methoxy-5-(all-trans-polyprenyl)benzoate + H(+) = a 2-methoxy-6-(all-trans-polyprenyl)phenol + CO2. The protein operates within cofactor biosynthesis; ubiquinone biosynthesis. Functionally, lyase that catalyzes the C1-decarboxylation of 4-hydroxy-3-methoxy-5-(all-trans-polyprenyl)benzoic acid into 2-methoxy-6-(all-trans-polyprenyl)phenol during ubiquinone biosynthesis. In Cryptosporidium parvum (strain Iowa II), this protein is Ubiquinone biosynthesis protein COQ4 homolog, mitochondrial.